Consider the following 245-residue polypeptide: 1-(5-phosphoribosyl)-5-[(5-phosphoribosylamino)methylideneamino] imidazole-4-carboxamide isomerase (245 aa).

Aspartate 15 acts as the Proton acceptor in catalysis. Aspartate 135 serves as the catalytic Proton donor.

The protein belongs to the HisA/HisF family.

It localises to the cytoplasm. It carries out the reaction 1-(5-phospho-beta-D-ribosyl)-5-[(5-phospho-beta-D-ribosylamino)methylideneamino]imidazole-4-carboxamide = 5-[(5-phospho-1-deoxy-D-ribulos-1-ylimino)methylamino]-1-(5-phospho-beta-D-ribosyl)imidazole-4-carboxamide. It functions in the pathway amino-acid biosynthesis; L-histidine biosynthesis; L-histidine from 5-phospho-alpha-D-ribose 1-diphosphate: step 4/9. This Haloquadratum walsbyi (strain DSM 16790 / HBSQ001) protein is 1-(5-phosphoribosyl)-5-[(5-phosphoribosylamino)methylideneamino] imidazole-4-carboxamide isomerase.